A 171-amino-acid polypeptide reads, in one-letter code: Crossover junction endodeoxyribonuclease RuvC (171 aa).

Catalysis depends on residues D7, E66, and D138. Mg(2+) contacts are provided by D7, E66, and D138.

This sequence belongs to the RuvC family. In terms of assembly, homodimer which binds Holliday junction (HJ) DNA. The HJ becomes 2-fold symmetrical on binding to RuvC with unstacked arms; it has a different conformation from HJ DNA in complex with RuvA. In the full resolvosome a probable DNA-RuvA(4)-RuvB(12)-RuvC(2) complex forms which resolves the HJ. Mg(2+) is required as a cofactor.

The protein localises to the cytoplasm. The enzyme catalyses Endonucleolytic cleavage at a junction such as a reciprocal single-stranded crossover between two homologous DNA duplexes (Holliday junction).. In terms of biological role, the RuvA-RuvB-RuvC complex processes Holliday junction (HJ) DNA during genetic recombination and DNA repair. Endonuclease that resolves HJ intermediates. Cleaves cruciform DNA by making single-stranded nicks across the HJ at symmetrical positions within the homologous arms, yielding a 5'-phosphate and a 3'-hydroxyl group; requires a central core of homology in the junction. The consensus cleavage sequence is 5'-(A/T)TT(C/G)-3'. Cleavage occurs on the 3'-side of the TT dinucleotide at the point of strand exchange. HJ branch migration catalyzed by RuvA-RuvB allows RuvC to scan DNA until it finds its consensus sequence, where it cleaves and resolves the cruciform DNA. The sequence is that of Crossover junction endodeoxyribonuclease RuvC from Francisella philomiragia subsp. philomiragia (strain ATCC 25017 / CCUG 19701 / FSC 153 / O#319-036).